Here is a 1557-residue protein sequence, read N- to C-terminus: MPEIYGPQPLKPLNTVMRHGFEEQYQSDQLLQSLANDFIFYFDDKRHKTNGNPIPEEDKQRDVNRYYQPITDWKIMKDRQKTVSAALLLCLNLGVDPPDVMKTHPCARVEAWVDPLNFQDSKKAIEQIGKNLQAQYETLSLRTRYKQSLDPCVEDVKRFCNSLRRTSKEDRILFHYNGHGVPKPTKSGEIWVFNRGYTQYIPVSLYDLQTWLGAPCIFVYDCNSAENILINFQKFVQKRIKDDEEGNHDVAAPSPTSAYQDCFQLASCTSDELLLMSPELPADLFSCCLTCPIEISIRIFLMQSPLKDSKYKIFFENSTSNQPFGDSKNSFKSKIPNVNIPGMLSDRRTPLGELNWIFTAITDTIAWTSLPRPLFKKLFRHDLMIAALFRNFLLAKRIMPWYNCHPVSDPELPDSITTHPMWKSWDLAMDEVLTKIVIDLKNAPPATALESQMILQQQETLQNGGSSKSNAQDTKAGSIQTQSRFAVANLSTMSLVNNPALQSRKSISLQSSQQQLQQQQQQQQQFTGFFEQNLTAFELWLKYASNVRHPPEQLPIVLQVLLSQVHRIRALVLLSRFLDLGPWAVYLSLSIGIFPYVLKLLQSPAPELKPILVFIWARIMSIDYKNTQSELIKEKGYMYFVTVLVPDWGVNGMSATNGSAMINSGNPLTMTASQNINGPSSRYYERQQGNRTSNLGHNNLPFYHSNDTTDEQKAMAVFVLASFVRNFPLGQKNCFSLELVNKLCFYIDNSEIPLLRQWCVILLGLLFADNPLNRFVCMNTGAVEILLKSLKDPVPEVRTASIFALKHFISGFQDAEVILRLQQEFEEQYQQLHSQLQHLQNQSHLQQQQSQQQQQHLEQQQMKIEKQIRHCQVMQNQLEVIDLRKLKRQEIGNLISILPLINDGSSLVRKELVVYFSHIVSRYSNFFIVVVFNDLLEEIKLLEKSDINTRNTSDKYSVSQGSIFYTVWKSLLILAEDPFLENKELSKQVIDYILLELSAHKELGGPFAVMEKFLLKRSSKAHQTGKFGFNSSQVQFVKSSLRSFSPNERVDNNAFKKEQQQHDPKISHPMRTSLAKLFQSLGFSESNSDSDTQSSNTSMKSHTSKKGPSGLYLLNGNNNIYPTAETPRFRKHTEPLQLPLNSSFLDYSREYFQEPQMKKQEADEPGSVEYNARLWRRNRNETIIQETQGEKKLSIYGNWSKKLISLNNKSQPKLMKFAQFEDQLITADDRSTITVFDWEKGKTLSKFSNGTPFGTKVTDLKLINEDDSALLLTGSSDGVIKIYRDYQDVDTFKIVSAWRGLTDMLLTPRSTGLLTEWLQIRGSLLTTGDVKVIRVWDAHTETVEVDIPAKTSSLITSLTADQLAGNIFVAGFADGSLRVYDRRLDPRDSMIRRWRAGNDKQGVWINNVHLQRGGYRELVSGATNGVVELWDIRSEDPVESFVDQNVTSQYGSQQKPTTMTCMQVHEHAPIIATGTKQIKIWTTSGDLLNSFKNSHNNGVTSTLAATGIPKSLSYSSTSDAFLSSMAFHPHRMMIAATNSHDSIVNIYKCEDERIDYF.

4 HEAT repeats span residues 548 to 586 (RHPP…WAVY), 588 to 625 (SLSI…IDYK), 777 to 814 (CMNT…GFQD), and 888 to 925 (RQEI…RYSN). Over residues 1084-1098 (SESNSDSDTQSSNTS) the composition is skewed to low complexity. The segment at 1084 to 1114 (SESNSDSDTQSSNTSMKSHTSKKGPSGLYLL) is disordered. WD repeat units lie at residues 1207–1248 (NNKS…SKFS), 1252–1293 (PFGT…DTFK), 1296–1346 (SAWR…VEVD), 1350–1390 (KTSS…RDSM), 1400–1440 (KQGV…PVES), 1452–1492 (SQQK…NSFK), and 1517–1557 (TSDA…IDYF).

Belongs to the WD repeat RAPTOR family. As to quaternary structure, the target of rapamycin complex 1 (TORC1) is composed of at least KOG1, LST8, TCO89 and either TOR1 (TORC1-A) or TOR2 (TORC1-B). Interacts with PIB2; following activation of PIB2 by glutamine or cysteine. TORC1 binds to and is inhibited by FKBP-rapamycin.

It is found in the cell membrane. Its subcellular location is the vacuole membrane. Component of TORC1, which regulates multiple cellular processes to control cell growth in response to environmental signals. Nutrient limitation and environmental stress signals cause inactivation of TORC1. Active TORC1 positively controls ribosome biogenesis via control of rRNA, ribosomal protein and tRNA gene expression, and rRNA processing. TORC1 positively controls protein biosynthesis by regulation of mRNA stability, translation initiation factor activity, and high-affinity amino acid permeases that serve to provide amino acids for use by the translation machinery. TORC1 also promotes growth by sequestering a number of nutrient and general stress-responsive transcription factors in the cytoplasm. TORC1 negatively controls macroautophagy, a process to recycle surplus cytoplasmic mass under nutrient starvation conditions. KOG1 may have a role in binding and recruiting substrates of TORC1. This Saccharomyces cerevisiae (strain ATCC 204508 / S288c) (Baker's yeast) protein is Target of rapamycin complex 1 subunit KOG1 (KOG1).